The following is a 563-amino-acid chain: Lipoprotein LpqB (563 aa).

The signal sequence occupies residues 1 to 19; that stretch reads MRRMKALTAAMTAALLVSG. Cys20 carries N-palmitoyl cysteine lipidation. Cys20 carries the S-diacylglycerol cysteine lipid modification.

Belongs to the LpqB lipoprotein family.

The protein localises to the cell membrane. The sequence is that of Lipoprotein LpqB from Corynebacterium efficiens (strain DSM 44549 / YS-314 / AJ 12310 / JCM 11189 / NBRC 100395).